The following is a 1304-amino-acid chain: DNA-directed RNA polymerase subunit beta' (1304 aa).

The disordered stretch occupies residues 1–23 (MSEKGRFSAGLSRQAADGNKADA). Zn(2+) contacts are provided by Cys241, Cys315, Cys322, and Cys325. Residues 1256 to 1268 (AAEPEPDEEEEEP) show a composition bias toward acidic residues. The tract at residues 1256–1304 (AAEPEPDEEEEEPAVLPELPPRLILEDDQLIDDSTPAFDELEEDDDEEE) is disordered. Low complexity predominate over residues 1269-1278 (AVLPELPPRL). The span at 1294–1304 (DELEEDDDEEE) shows a compositional bias: acidic residues.

It belongs to the RNA polymerase beta' chain family. RpoC2 subfamily. As to quaternary structure, in cyanobacteria the RNAP catalytic core is composed of 2 alpha, 1 beta, 1 beta', 1 gamma and 1 omega subunit. When a sigma factor is associated with the core the holoenzyme is formed, which can initiate transcription. Requires Zn(2+) as cofactor.

The catalysed reaction is RNA(n) + a ribonucleoside 5'-triphosphate = RNA(n+1) + diphosphate. DNA-dependent RNA polymerase catalyzes the transcription of DNA into RNA using the four ribonucleoside triphosphates as substrates. In Synechococcus sp. (strain JA-2-3B'a(2-13)) (Cyanobacteria bacterium Yellowstone B-Prime), this protein is DNA-directed RNA polymerase subunit beta'.